Consider the following 128-residue polypeptide: Large ribosomal subunit protein bL12 (128 aa).

This sequence belongs to the bacterial ribosomal protein bL12 family. In terms of assembly, homodimer. Part of the ribosomal stalk of the 50S ribosomal subunit. Forms a multimeric L10(L12)X complex, where L10 forms an elongated spine to which 2 to 4 L12 dimers bind in a sequential fashion. Binds GTP-bound translation factors.

In terms of biological role, forms part of the ribosomal stalk which helps the ribosome interact with GTP-bound translation factors. Is thus essential for accurate translation. The chain is Large ribosomal subunit protein bL12 from Rubrobacter xylanophilus (strain DSM 9941 / JCM 11954 / NBRC 16129 / PRD-1).